We begin with the raw amino-acid sequence, 1487 residues long: Collagen alpha-1(II) chain (1487 aa).

The first 25 residues, 1 to 25, serve as a signal peptide directing secretion; it reads MIRLGAPQTLVLLTLLVAAVLRCQG. Residues 26–181 constitute a propeptide, N-terminal propeptide; sequence QDVQEAGSCV…PPGLGGNFAA (156 aa). Positions 32–90 constitute a VWFC domain; it reads GSCVQDGQRYNDKDVWKPEPCRICVCDTGTVLCDDIICEDVKDCLSPEIPFGECCPICP. Residues 97–1237 are disordered; sequence SGQPGPKGQK…PREKGPDPLQ (1141 aa). Composition is skewed to basic and acidic residues over residues 105-116 and 133-154; these read QKGEPGDIKDIV and PRGD…RDGE. Pro residues predominate over residues 158 to 173; it reads PGNPGPPGPPGPPGPP. The residue at position 190 (lysine 190) is a 5-hydroxylysine. O-linked (Gal...) hydroxylysine glycosylation is present at lysine 190. A triple-helical region region spans residues 201 to 1214; sequence GPMGPMGPRG…PGPPGPPGPP (1014 aa). The span at 208–217 shows a compositional bias: pro residues; that stretch reads PRGPPGPAGA. Residues 218 to 239 show a composition bias toward low complexity; it reads PGPQGFQGNPGEPGEPGVSGPM. Pro residues predominate over residues 241-250; that stretch reads PRGPPGPPGK. Positions 251 to 265 are enriched in basic and acidic residues; the sequence is PGDDGEAGKPGKAGE. 3 positions are modified to 5-hydroxylysine: lysine 287, lysine 299, and lysine 308. O-linked (Gal...) hydroxylysine glycosylation is found at lysine 287, lysine 299, and lysine 308. Low complexity-rich tracts occupy residues 310–320 and 335–350; these read ESGSPGENGSP and TGPA…DGQP. The segment covering 360–369 has biased composition (gly residues); sequence GPAGGPGFPG. Composition is skewed to low complexity over residues 370–382 and 391–431; these read APGA…PTGA and PRGE…AGAP. A 5-hydroxylysine modification is found at lysine 374. An O-linked (Gal...) hydroxylysine glycan is attached at lysine 374. Positions 433-442 are enriched in pro residues; the sequence is FPGPRGPPGP. A 5-hydroxylysine mark is found at lysine 608 and lysine 620. 2 O-linked (Gal...) hydroxylysine glycosylation sites follow: lysine 608 and lysine 620. 2 stretches are compositionally biased toward low complexity: residues 622–631 and 656–667; these read LPGAPGLRGL and QGAPGPSGFQGL. A 4-hydroxyproline mark is found at proline 659 and proline 668. The residue at position 670 (proline 670) is a 3-hydroxyproline. 2 positions are modified to 4-hydroxyproline: proline 671 and proline 674. A compositionally biased stretch (basic and acidic residues) spans 764–775; that stretch reads KGDRGDVGEKGP. Composition is skewed to low complexity over residues 833–848 and 877–913; these read AGFA…PGAK and PTGV…SNGN. Proline 907 bears the 3-hydroxyproline mark. A 4-hydroxyproline mark is found at proline 908, proline 914, and proline 920. Residues 1069–1079 are compositionally biased toward pro residues; that stretch reads APGPPGSPGPA. Residues 1115-1129 show a composition bias toward basic and acidic residues; sequence RGDKGEAGEPGERGL. Position 1130 is a 5-hydroxylysine (lysine 1130). A glycan (O-linked (Gal...) hydroxylysine) is linked at lysine 1130. A 3-hydroxyproline modification is found at proline 1144. Residues 1148–1157 are compositionally biased toward low complexity; sequence SGDQGASGPA. Position 1181 is a 4-hydroxyproline (proline 1181). Position 1186 is a 3-hydroxyproline (proline 1186). Position 1187 is a 4-hydroxyproline (proline 1187). Residues 1199 to 1216 are compositionally biased toward pro residues; the sequence is AGPPGNPGPPGPPGPPGP. 3-hydroxyproline is present on proline 1201. 4-hydroxyproline occurs at positions 1202 and 1205. The residue at position 1207 (proline 1207) is a 3-hydroxyproline. Residues proline 1208 and proline 1211 each carry the 4-hydroxyproline modification. Proline 1213 carries the 3-hydroxyproline modification. Proline 1214 bears the 4-hydroxyproline mark. Residues 1215–1241 form a nonhelical region (C-terminal) region; that stretch reads GPGIDMSAFAGLGPREKGPDPLQYMRA. Positions 1253–1487 constitute a Fibrillar collagen NC1 domain; it reads AEVDATLKSL…GVDIGPVCFL (235 aa). Cystine bridges form between cysteine 1283–cysteine 1315, cysteine 1323–cysteine 1485, and cysteine 1393–cysteine 1438. 5 residues coordinate Ca(2+): aspartate 1301, asparagine 1303, glutamine 1304, cysteine 1306, and aspartate 1309. An N-linked (GlcNAc...) asparagine glycan is attached at asparagine 1388.

It belongs to the fibrillar collagen family. As to quaternary structure, homotrimers of alpha 1(II) chains. In terms of processing, the N-telopeptide is covalently linked to the helical COL2 region of alpha 1(IX), alpha 2(IX) and alpha 3(IX) chain. The C-telopeptide is covalently linked to an another site in the helical region of alpha 3(IX) COL2. Contains mostly 4-hydroxyproline. Prolines at the third position of the tripeptide repeating unit (G-X-P) are 4-hydroxylated in some or all of the chains. Post-translationally, contains 3-hydroxyproline at a few sites. This modification occurs on the first proline residue in the sequence motif Gly-Pro-Hyp, where Hyp is 4-hydroxyproline. In terms of processing, lysine residues at the third position of the tripeptide repeating unit (G-X-Y) are 5-hydroxylated in some or all of the chains. O-glycosylated on hydroxylated lysine residues. The O-linked glycan consists of a Glc-Gal disaccharide. Isoform 2 is highly expressed in juvenile chondrocyte and low in fetal chondrocyte.

Its subcellular location is the secreted. The protein localises to the extracellular space. The protein resides in the extracellular matrix. Its function is as follows. Type II collagen is specific for cartilaginous tissues. It is essential for the normal embryonic development of the skeleton, for linear growth and for the ability of cartilage to resist compressive forces. The protein is Collagen alpha-1(II) chain of Homo sapiens (Human).